The following is a 379-amino-acid chain: 8-amino-7-oxononanoate synthase (379 aa).

Substrate-binding residues include arginine 27 and arginine 34. 114–115 is a binding site for pyridoxal 5'-phosphate; the sequence is GY. Position 139 (histidine 139) interacts with substrate. Pyridoxal 5'-phosphate is bound by residues serine 187, 212–215, and 232–235; these read DDAH and TLSK. N6-(pyridoxal phosphate)lysine is present on lysine 235. Residue threonine 344 coordinates substrate.

Belongs to the class-II pyridoxal-phosphate-dependent aminotransferase family. BioF subfamily. Homodimer. The cofactor is pyridoxal 5'-phosphate.

It catalyses the reaction 6-carboxyhexanoyl-[ACP] + L-alanine + H(+) = (8S)-8-amino-7-oxononanoate + holo-[ACP] + CO2. It functions in the pathway cofactor biosynthesis; biotin biosynthesis. In terms of biological role, catalyzes the decarboxylative condensation of pimeloyl-[acyl-carrier protein] and L-alanine to produce 8-amino-7-oxononanoate (AON), [acyl-carrier protein], and carbon dioxide. This chain is 8-amino-7-oxononanoate synthase, found in Methylobacterium sp. (strain 4-46).